We begin with the raw amino-acid sequence, 142 residues long: Hemoglobin subunit alpha-1 (142 aa).

N-acetylserine is present on Ser-1. Positions 1–142 constitute a Globin domain; that stretch reads SLSDKDKAAV…VALALAERYR (142 aa). Position 59 (His-59) interacts with O2. His-88 is a heme b binding site.

The protein belongs to the globin family. In terms of assembly, hb1 is a heterotetramer of two alpha-2 chains and two beta chains, while Hb2 is a heterotetramer of two alpha-2 chains and two beta chains. In terms of tissue distribution, red blood cells.

Involved in oxygen transport from gills to the various peripheral tissues. This Notothenia angustata (Rockcod) protein is Hemoglobin subunit alpha-1 (hba1).